The primary structure comprises 338 residues: MAAPCAAQCLYRTGGLRLLQRISRLPHCHKDASLAHQCQFHRSFFWRKPKTSHSVVRPAIVRPAYPVPKHIQRPDYVSSSKVPEWPDYIEIKDEEQIQGLRRACQLARHILLLTGNSLKVGMTTDEIDFIVHQEAIRHNGYPSPLHYGGFPKSVCTSVNNVVCHGIPDSRPLQDGDIINIDVTVYLEGYHGDTSETFLIGSVNDQGRKLVDVARQCRDQAIAACGPGQPLCVIGNIISNIANSNGFRVCPYFIGHGIGEYFHGHPEIWHHANDNDLKMEEGMSFTIEPILMEGTSGFRILSDKWTAVSVDDKRSAQFEHTVVITSDGVEILTKLPEED.

Residues 1–47 (MAAPCAAQCLYRTGGLRLLQRISRLPHCHKDASLAHQCQFHRSFFWR) constitute a mitochondrion transit peptide. His164 provides a ligand contact to substrate. A divalent metal cation-binding residues include Asp181, Asp192, and His255. Position 262 (His262) interacts with substrate. Residues Glu287 and Glu318 each contribute to the a divalent metal cation site.

This sequence belongs to the peptidase M24A family. Methionine aminopeptidase type 1 subfamily. It depends on Co(2+) as a cofactor. Zn(2+) serves as cofactor. The cofactor is Mn(2+). Fe(2+) is required as a cofactor.

Its subcellular location is the mitochondrion. The enzyme catalyses Release of N-terminal amino acids, preferentially methionine, from peptides and arylamides.. In terms of biological role, removes the N-terminal methionine from nascent proteins. The N-terminal methionine is often cleaved when the second residue in the primary sequence is small and uncharged (Met-Ala-, Cys, Gly, Pro, Ser, Thr, or Val). Requires deformylation of the N(alpha)-formylated initiator methionine before it can be hydrolyzed. In Danio rerio (Zebrafish), this protein is Methionine aminopeptidase 1D, mitochondrial (metap1d).